The chain runs to 262 residues: Proenkephalin-A-A (262 aa).

An N-terminal signal peptide occupies residues 1-24 (MGLEARHCCMFLLVFASLSVEIRA). Disulfide bonds link Cys-26–Cys-48, Cys-30–Cys-52, and Cys-33–Cys-65. Propeptides lie at residues 110 to 131 (MDEL…LAKN), 139 to 177 (EYDS…GEIN), 190 to 201 (STDLEDETSGIQ), 211 to 221 (VGRPEWWEDYQ), and 229 to 253 (TRFT…PDME).

It belongs to the opioid neuropeptide precursor family. The N-terminal domain contains 6 conserved cysteines thought to be involved in disulfide bonding and/or processing.

The protein resides in the secreted. In terms of biological role, enkephalin neuropeptides compete with and mimic the effects of opiate drugs. They play a role in a number of physiologic functions, including pain perception and responses to stress. In Xenopus laevis (African clawed frog), this protein is Proenkephalin-A-A (penk-a).